Here is a 388-residue protein sequence, read N- to C-terminus: Chorismate synthase (388 aa).

Positions 39 and 45 each coordinate NADP(+). The disordered stretch occupies residues 95–115 (EKQKKIRRVSKPRPGHADLVG). Residues 98–108 (KKIRRVSKPRP) are compositionally biased toward basic residues. FMN contacts are provided by residues 130–132 (RSS), 251–252 (NA), G296, 311–315 (KPIPT), and R337.

The protein belongs to the chorismate synthase family. In terms of assembly, homotetramer. FMNH2 serves as cofactor.

It catalyses the reaction 5-O-(1-carboxyvinyl)-3-phosphoshikimate = chorismate + phosphate. The protein operates within metabolic intermediate biosynthesis; chorismate biosynthesis; chorismate from D-erythrose 4-phosphate and phosphoenolpyruvate: step 7/7. Its function is as follows. Catalyzes the anti-1,4-elimination of the C-3 phosphate and the C-6 proR hydrogen from 5-enolpyruvylshikimate-3-phosphate (EPSP) to yield chorismate, which is the branch point compound that serves as the starting substrate for the three terminal pathways of aromatic amino acid biosynthesis. This reaction introduces a second double bond into the aromatic ring system. In Enterococcus faecalis (strain ATCC 700802 / V583), this protein is Chorismate synthase.